The sequence spans 819 residues: Leucine--tRNA ligase (819 aa).

The 'HIGH' region motif lies at 40 to 51 (PYPSGAGLHVGH). The 'KMSKS' region motif lies at 600–604 (KMSKS). K603 contacts ATP.

This sequence belongs to the class-I aminoacyl-tRNA synthetase family.

Its subcellular location is the cytoplasm. It carries out the reaction tRNA(Leu) + L-leucine + ATP = L-leucyl-tRNA(Leu) + AMP + diphosphate. The chain is Leucine--tRNA ligase from Chlamydia trachomatis serovar L2 (strain ATCC VR-902B / DSM 19102 / 434/Bu).